The chain runs to 772 residues: Cellulosomal-scaffolding protein B (772 aa).

The Cohesin 1 domain maps to 1-80 (DPSKSFDSAI…TTFVAGGVNL (80 aa)). The interval 81–93 (GSSVPTTQPNVPS) is linker (Pro/Thr-rich). The region spanning 94–240 (DGVVVEIGKV…VNVGNATPTK (147 aa)) is the Cohesin 2 domain. Positions 235 to 276 (NATPTKGATPTNTATPTKSATATPPGHSVPTNTPTNTPANTP) are enriched in low complexity. 2 disordered regions span residues 235–277 (NATP…NTPV) and 438–464 (VVPSTQPVTTPPATTKPPATTIPPSDD). The segment at 241 to 272 (GATPTNTATPTKSATATPPGHSVPTNTPTNTP) is linker (Pro/Thr-rich). The CBM3 domain occupies 277–435 (VSGNLKVEFY…GVLVWGKEPG (159 aa)). Over residues 438–461 (VVPSTQPVTTPPATTKPPATTIPP) the composition is skewed to low complexity. Residues 440-461 (PSTQPVTTPPATTKPPATTIPP) form a linker (Pro/Thr-rich) region. The region spanning 462–607 (SDDPNAIKIK…ETDLINGGVL (146 aa)) is the Cohesin 3 domain. In terms of domain architecture, Dockerin spans 704 to 771 (IMMWVGDIVK…FGATSSDYDA (68 aa)).

O-glycosylated on most but not all Thr residues of the linker units.

The protein localises to the secreted. Functionally, acts as a scaffolding protein in the cellulosome. It promotes binding of cellulose to the catalytic domains of the cellulolytic enzymes probably through the binding of the nine repeated domains with dockerin domains present in catalytic subunits of the cellulosome. This is Cellulosomal-scaffolding protein B (cipB) from Acetivibrio thermocellus (Hungateiclostridium thermocellum).